The primary structure comprises 230 residues: MVPEYSRFYNILGYNFKDYTLLIRALTHRSKTKKNYERLEFLGDSVLSFVIAEVLYKQFTDLAEGKLSQLRSKLVKGTTLAQLASSLKMDEYIILGASEQGGHKREKILEDVFEAVIGAIYLDSDFATVKKVILKWYQPIISSINLDTIKVKDSKSKLQEILLQNALSLPEYSIETIDGKDHEQQFTVVAVSKDLNLRVKAQGTSRKKAEQKTAEKMIEMLSQQGLHEKK.

The RNase III domain maps to 5–125 (YSRFYNILGY…VIGAIYLDSD (121 aa)). Glu-40 lines the Mg(2+) pocket. Asp-44 is a catalytic residue. Mg(2+) is bound by residues Asp-111 and Glu-114. Glu-114 is an active-site residue. Positions 153–223 (DSKSKLQEIL…AEKMIEMLSQ (71 aa)) constitute a DRBM domain.

The protein belongs to the ribonuclease III family. Homodimer. Mg(2+) is required as a cofactor.

The protein resides in the cytoplasm. It catalyses the reaction Endonucleolytic cleavage to 5'-phosphomonoester.. Digests double-stranded RNA. Involved in the processing of primary rRNA transcript to yield the immediate precursors to the large and small rRNAs (23S and 16S). Processes some mRNAs, and tRNAs when they are encoded in the rRNA operon. Processes pre-crRNA and tracrRNA of type II CRISPR loci if present in the organism. In Francisella tularensis subsp. holarctica (strain LVS), this protein is Ribonuclease 3.